The following is a 298-amino-acid chain: Acetyl-coenzyme A carboxylase carboxyl transferase subunit beta (298 aa).

Residues 1-21 form a disordered region; it reads MNQEVKSGKVLSPSTPWTQRP. The C4-type zinc-finger motif lies at 20–67; the sequence is RPVPGIEVADEQQTLKATFTEPTIECPECHALVTRTAISFNAYVCPQC. Residues 41 to 298 form the CoA carboxyltransferase N-terminal domain; it reads PTIECPECHA…RLVSKLMNLP (258 aa). 4 residues coordinate Zn(2+): Cys-45, Cys-48, Cys-64, and Cys-67.

It belongs to the AccD/PCCB family. Acetyl-CoA carboxylase is a heterohexamer composed of biotin carboxyl carrier protein (AccB), biotin carboxylase (AccC) and two subunits each of ACCase subunit alpha (AccA) and ACCase subunit beta (AccD). Requires Zn(2+) as cofactor.

The protein localises to the cytoplasm. It catalyses the reaction N(6)-carboxybiotinyl-L-lysyl-[protein] + acetyl-CoA = N(6)-biotinyl-L-lysyl-[protein] + malonyl-CoA. The protein operates within lipid metabolism; malonyl-CoA biosynthesis; malonyl-CoA from acetyl-CoA: step 1/1. Component of the acetyl coenzyme A carboxylase (ACC) complex. Biotin carboxylase (BC) catalyzes the carboxylation of biotin on its carrier protein (BCCP) and then the CO(2) group is transferred by the transcarboxylase to acetyl-CoA to form malonyl-CoA. This is Acetyl-coenzyme A carboxylase carboxyl transferase subunit beta from Acinetobacter baumannii (strain SDF).